The primary structure comprises 418 residues: Serine hydroxymethyltransferase (418 aa).

(6S)-5,6,7,8-tetrahydrofolate is bound by residues Leu-121 and 125–127 (GHL). Residue Lys-230 is modified to N6-(pyridoxal phosphate)lysine. 356–358 (SPF) provides a ligand contact to (6S)-5,6,7,8-tetrahydrofolate.

This sequence belongs to the SHMT family. In terms of assembly, homodimer. It depends on pyridoxal 5'-phosphate as a cofactor.

It localises to the cytoplasm. The catalysed reaction is (6R)-5,10-methylene-5,6,7,8-tetrahydrofolate + glycine + H2O = (6S)-5,6,7,8-tetrahydrofolate + L-serine. The protein operates within one-carbon metabolism; tetrahydrofolate interconversion. Its pathway is amino-acid biosynthesis; glycine biosynthesis; glycine from L-serine: step 1/1. Its function is as follows. Catalyzes the reversible interconversion of serine and glycine with tetrahydrofolate (THF) serving as the one-carbon carrier. This reaction serves as the major source of one-carbon groups required for the biosynthesis of purines, thymidylate, methionine, and other important biomolecules. Also exhibits THF-independent aldolase activity toward beta-hydroxyamino acids, producing glycine and aldehydes, via a retro-aldol mechanism. This is Serine hydroxymethyltransferase from Shewanella piezotolerans (strain WP3 / JCM 13877).